Reading from the N-terminus, the 601-residue chain is Probable Xaa-Pro aminopeptidase P (601 aa).

Aspartate 398, aspartate 409, glutamate 507, and glutamate 521 together coordinate Mn(2+).

It belongs to the peptidase M24B family. It depends on Mn(2+) as a cofactor.

The enzyme catalyses Release of any N-terminal amino acid, including proline, that is linked to proline, even from a dipeptide or tripeptide.. Catalyzes the removal of a penultimate prolyl residue from the N-termini of peptides. The protein is Probable Xaa-Pro aminopeptidase P (ampp) of Sclerotinia sclerotiorum (strain ATCC 18683 / 1980 / Ss-1) (White mold).